Consider the following 173-residue polypeptide: Trafficking regulator of GLUT4 1 (173 aa).

Residues M1–Q10 show a composition bias toward pro residues. The segment at M1–L20 is disordered. The Cytoplasmic segment spans residues M1–L102. Residues S16, S43, S45, S70, S84, and S85 each carry the phosphoserine modification. Positions V103–F123 form an intramembrane region, helical. The Cytoplasmic portion of the chain corresponds to S124 to S150. A helical membrane pass occupies residues I151–V171. The Extracellular portion of the chain corresponds to P172–K173.

The protein belongs to the CD225/Dispanin family. In terms of assembly, interacts with SLC2A4; the interaction is required for proper SLC2A4 reacycling after insulin stimulation. Expressed specifically in white and brown adipose tissues.

The protein resides in the cell membrane. It is found in the endomembrane system. It localises to the cytoplasm. The protein localises to the perinuclear region. Functionally, regulates insulin-mediated adipose tissue glucose uptake and transport by modulation of SLC2A4 recycling. Not required for SLC2A4 membrane fusion upon an initial stimulus, but rather is necessary for proper protein recycling during prolonged insulin stimulation. In Mus musculus (Mouse), this protein is Trafficking regulator of GLUT4 1 (Trarg1).